Here is a 182-residue protein sequence, read N- to C-terminus: Putative manganese efflux pump MntP (182 aa).

Helical transmembrane passes span 3-23 (ILLLAVALSMDCVALSMSNGA), 42-62 (FFQGAMPIIGFFLGALFVGFI), 65-85 (IDHFVAFAILGFLGVKMIFDS), 126-146 (IWFSCAIIAFVCFILSFAATF), and 161-181 (ILGGLILIFIGFKILITHLGI).

This sequence belongs to the MntP (TC 9.B.29) family.

The protein localises to the cell inner membrane. Probably functions as a manganese efflux pump. This Campylobacter hominis (strain ATCC BAA-381 / DSM 21671 / CCUG 45161 / LMG 19568 / NCTC 13146 / CH001A) protein is Putative manganese efflux pump MntP.